The following is a 252-amino-acid chain: 5'-nucleotidase SurE (252 aa).

Asp8, Asp9, Ser42, and Asn94 together coordinate a divalent metal cation.

It belongs to the SurE nucleotidase family. Requires a divalent metal cation as cofactor.

Its subcellular location is the cytoplasm. The enzyme catalyses a ribonucleoside 5'-phosphate + H2O = a ribonucleoside + phosphate. Its function is as follows. Nucleotidase that shows phosphatase activity on nucleoside 5'-monophosphates. This is 5'-nucleotidase SurE from Ehrlichia ruminantium (strain Welgevonden).